Here is a 408-residue protein sequence, read N- to C-terminus: Imidazolonepropionase (408 aa).

Fe(3+) contacts are provided by His66 and His68. His66 and His68 together coordinate Zn(2+). 4-imidazolone-5-propanoate-binding residues include Arg75, Tyr138, and His171. Position 138 (Tyr138) interacts with N-formimidoyl-L-glutamate. His236 contributes to the Fe(3+) binding site. His236 is a binding site for Zn(2+). Gln239 is a 4-imidazolone-5-propanoate binding site. Asp311 is a Fe(3+) binding site. Zn(2+) is bound at residue Asp311. Residues Asn313 and Gly315 each coordinate N-formimidoyl-L-glutamate. 4-imidazolone-5-propanoate is bound at residue Ser316.

This sequence belongs to the metallo-dependent hydrolases superfamily. HutI family. It depends on Zn(2+) as a cofactor. Fe(3+) is required as a cofactor.

Its subcellular location is the cytoplasm. It carries out the reaction 4-imidazolone-5-propanoate + H2O = N-formimidoyl-L-glutamate. Its pathway is amino-acid degradation; L-histidine degradation into L-glutamate; N-formimidoyl-L-glutamate from L-histidine: step 3/3. Its function is as follows. Catalyzes the hydrolytic cleavage of the carbon-nitrogen bond in imidazolone-5-propanoate to yield N-formimidoyl-L-glutamate. It is the third step in the universal histidine degradation pathway. The protein is Imidazolonepropionase of Idiomarina loihiensis (strain ATCC BAA-735 / DSM 15497 / L2-TR).